A 143-amino-acid polypeptide reads, in one-letter code: Transcriptional regulator MraZ (143 aa).

SpoVT-AbrB domains follow at residues 5–47 and 76–119; these read THHP…PRAE and TDEQ…NAER.

It belongs to the MraZ family. In terms of assembly, forms oligomers.

Its subcellular location is the cytoplasm. It localises to the nucleoid. In Saccharopolyspora erythraea (strain ATCC 11635 / DSM 40517 / JCM 4748 / NBRC 13426 / NCIMB 8594 / NRRL 2338), this protein is Transcriptional regulator MraZ.